The primary structure comprises 240 residues: Terpene cyclase cdmG (240 aa).

Helical transmembrane passes span 16-36 (YASI…LNYG), 48-68 (YGMA…YTVI), 78-98 (IIMT…IKFA), 112-132 (IPFI…ALAA), 134-154 (VGPG…LTIG), and 167-187 (GVSY…VICV). A glycan (N-linked (GlcNAc...) asparagine) is linked at N197. A helical membrane pass occupies residues 205-225 (IMKCFSGISLAVEIVYGVTLW).

This sequence belongs to the paxB family.

The protein resides in the membrane. It carries out the reaction verruculide C epoxide = 3-hydroxypentacecilide A. It functions in the pathway secondary metabolite biosynthesis; terpenoid biosynthesis. In terms of biological role, terpene cyclase; part of the gene cluster that mediates the biosynthesis of chrodrimanin B, a meroterpenoid that acts as a potent blocker of insect GABA-gated chloride channels. The first step of the pathway is the biosynthesis of 6-hydroxymellein by the polyketide synthase cdmE. The prenyltransferase cdmH acts as a 6-hydroxymellein 5-farnesyltransferase and produces the hydrophobic metabolite verruculide C. The FAD-dependent monooxygenase cdmI further converts verruculide C into verruculide B. The terpene cyclase cdmG then produced the pentacyclic molecule 3-hydroxypentacecilide A, the backbone structure of chrodrimanin B, via folding the farnesyl moiety of the substrate into the chair-boat conformation. The short-chain dehydrogenase/reductase cdmF functions as the 3-OH dehydrogenase that oxidizes the C-3 hydroxyl group of 3-hydroxypentacecilide A and produces chrodrimanin C, the dehydrogenated product of 3-hydroxypentacecilide A. The cytochrome P450 monooxygenase cdmJ then accepts both 3-hydroxypentacecilide A and chrodrimanin C and functions as a C-7-beta-hydroxylase to produce respectively chrodrimanin H and chrodrimanin F. The dioxygenase cdmA accepts chrodrimanin H to afford chrodrimanin E, which is further transformed to chrodrimanin A by the dioxygenase cdmD. CdmA can also accept chrodrimanin C as substrate to convert it into verruculide A, which is further converted into chrodrimanin T by cdmD. The last step of the biosynthesis is proposed to be performed by the acetyltransferase cdmC which acetylates chrodrimanin A to yield chrodrimanin B. The pathway may also lead to the production of additional shunt products, including chrodrimanins T and U. The chain is Terpene cyclase cdmG from Talaromyces verruculosus (Penicillium verruculosum).